The chain runs to 399 residues: Imidazolonepropionase (399 aa).

Fe(3+)-binding residues include His68 and His70. The Zn(2+) site is built by His68 and His70. The 4-imidazolone-5-propanoate site is built by Arg77, Tyr140, and His173. Tyr140 lines the N-formimidoyl-L-glutamate pocket. Position 238 (His238) interacts with Fe(3+). His238 lines the Zn(2+) pocket. Gln241 serves as a coordination point for 4-imidazolone-5-propanoate. Asp313 provides a ligand contact to Fe(3+). Asp313 lines the Zn(2+) pocket. Residues Asn315 and Gly317 each contribute to the N-formimidoyl-L-glutamate site. Residue Thr318 coordinates 4-imidazolone-5-propanoate.

It belongs to the metallo-dependent hydrolases superfamily. HutI family. The cofactor is Zn(2+). Fe(3+) is required as a cofactor.

The protein localises to the cytoplasm. The enzyme catalyses 4-imidazolone-5-propanoate + H2O = N-formimidoyl-L-glutamate. It functions in the pathway amino-acid degradation; L-histidine degradation into L-glutamate; N-formimidoyl-L-glutamate from L-histidine: step 3/3. Functionally, catalyzes the hydrolytic cleavage of the carbon-nitrogen bond in imidazolone-5-propanoate to yield N-formimidoyl-L-glutamate. It is the third step in the universal histidine degradation pathway. This chain is Imidazolonepropionase, found in Rhizorhabdus wittichii (strain DSM 6014 / CCUG 31198 / JCM 15750 / NBRC 105917 / EY 4224 / RW1) (Sphingomonas wittichii).